The following is a 194-amino-acid chain: Peptidyl-tRNA hydrolase (194 aa).

Y17 is a tRNA binding site. The active-site Proton acceptor is the H22. Positions 68, 70, and 115 each coordinate tRNA.

The protein belongs to the PTH family. In terms of assembly, monomer.

It is found in the cytoplasm. It carries out the reaction an N-acyl-L-alpha-aminoacyl-tRNA + H2O = an N-acyl-L-amino acid + a tRNA + H(+). Its function is as follows. Hydrolyzes ribosome-free peptidyl-tRNAs (with 1 or more amino acids incorporated), which drop off the ribosome during protein synthesis, or as a result of ribosome stalling. Catalyzes the release of premature peptidyl moieties from peptidyl-tRNA molecules trapped in stalled 50S ribosomal subunits, and thus maintains levels of free tRNAs and 50S ribosomes. In Pseudoalteromonas atlantica (strain T6c / ATCC BAA-1087), this protein is Peptidyl-tRNA hydrolase.